A 299-amino-acid chain; its full sequence is Syntenin-1 (299 aa).

Ser2 is modified (N-acetylserine). The tract at residues 2–103 is interaction with PDCD6IP; the sequence is SLYPSLEDLK…VAPVTGNDAG (102 aa). Short sequence motifs (LYPX(n)L motif) lie at residues 3-7, 46-50, and 50-54; these read LYPSL, LYPKL, and LYPEL. Ser6 is subject to Phosphoserine. Position 47 is a phosphotyrosine (Tyr47). PDZ domains lie at 115-194 and 199-273; these read EVIL…IRDR and TVTM…IMPT. 251–252 is an a 1,2-diacyl-sn-glycero-3-phospho-(1D-myo-inositol-4,5-bisphosphate) binding site; the sequence is KD.

As to quaternary structure, monomer and homodimer. Interacts with SDC1, SDC2, SDC3, SDC4, NRXN2, EPHA7, EPHB1, NF2 isoform 1, TGFA, IL5RA, NFASC, SDCBP2 and PTPRJ. Interacts with PDCD6IP. Forms a complex with PDCD6IP and SDC2. Interacts (via C-terminus) with TGFBR1. Binds to FZD7; this interaction is increased by inositol trisphosphate (IP3). Interacts with SMO. Post-translationally, phosphorylated on tyrosine residues.

Its subcellular location is the cell junction. The protein resides in the focal adhesion. It localises to the adherens junction. It is found in the cell membrane. The protein localises to the endoplasmic reticulum membrane. Its subcellular location is the nucleus. The protein resides in the melanosome. It localises to the cytoplasm. It is found in the cytosol. The protein localises to the cytoskeleton. Its subcellular location is the secreted. The protein resides in the extracellular exosome. It localises to the membrane raft. Its function is as follows. Multifunctional adapter protein involved in diverse array of functions including trafficking of transmembrane proteins, neuro and immunomodulation, exosome biogenesis, and tumorigenesis. Positively regulates TGFB1-mediated SMAD2/3 activation and TGFB1-induced epithelial-to-mesenchymal transition (EMT) and cell migration in various cell types. May increase TGFB1 signaling by enhancing cell-surface expression of TGFR1 by preventing the interaction between TGFR1 and CAV1 and subsequent CAV1-dependent internalization and degradation of TGFR1. In concert with SDC1/4 and PDCD6IP, regulates exosome biogenesis. Regulates migration, growth, proliferation, and cell cycle progression in a variety of cancer types. In adherens junctions may function to couple syndecans to cytoskeletal proteins or signaling components. Seems to couple transcription factor SOX4 to the IL-5 receptor (IL5RA). May also play a role in vesicular trafficking. Seems to be required for the targeting of TGFA to the cell surface in the early secretory pathway. The sequence is that of Syntenin-1 (Sdcbp) from Mus musculus (Mouse).